Consider the following 402-residue polypeptide: LIM homeobox transcription factor 1-beta (402 aa).

LIM zinc-binding domains follow at residues 56–106 (CEGC…CKQD) and 115–168 (CSGC…CKGD). Disordered regions lie at residues 176–229 (LSSV…LTTQ) and 326–346 (PYGS…PGDH). Residues 219 to 278 (PKRPRTILTTQQRRAFKASFEVSSKPCRKVRETLAAETGLSVRVVQVWFQNQRAKMKKLA) constitute a DNA-binding region (homeobox). The span at 326–338 (PYGSSDPFQQGLT) shows a compositional bias: polar residues.

As to quaternary structure, interacts with DHX9. Expressed in most tissues. Highest levels in testis, thyroid, duodenum, skeletal muscle, and pancreatic islets.

The protein localises to the nucleus. Its function is as follows. Transcription factor involved in the regulation of podocyte-expressed genes. Essential for the specification of dorsal limb fate at both the zeugopodal and autopodal levels. The chain is LIM homeobox transcription factor 1-beta (LMX1B) from Homo sapiens (Human).